The sequence spans 103 residues: Glutaredoxin-C1 (103 aa).

In terms of domain architecture, Glutaredoxin spans 1 to 102 (MDRVNRLAAQ…PLLRNAGALW (102 aa)). A disulfide bridge connects residues Cys21 and Cys24.

It belongs to the glutaredoxin family. CC-type subfamily.

Its subcellular location is the cytoplasm. In terms of biological role, has a glutathione-disulfide oxidoreductase activity in the presence of NADPH and glutathione reductase. Reduces low molecular weight disulfides and proteins. This chain is Glutaredoxin-C1 (GRXC1), found in Oryza sativa subsp. japonica (Rice).